The primary structure comprises 624 residues: Leucine-rich repeat, immunoglobulin-like domain and transmembrane domain-containing protein 1 (624 aa).

The first 21 residues, 1 to 21 (MWVALGMLWLLALGGPHQAWG), serve as a signal peptide directing secretion. The LRRNT domain occupies 22–59 (FCPSECSCSLRILSDGSKARTVVCSDPDLTLPPASIPP). Topologically, residues 22-527 (FCPSECSCSL…EVVDAEGTQR (506 aa)) are lumenal. LRR repeat units follow at residues 60-81 (DTCK…TFRP), 84-105 (RLEQ…MLRG), 108-129 (RLRE…ALRD), 132-153 (QLQL…AAHF), and 156-177 (NLTF…LLDV). An N-linked (GlcNAc...) asparagine glycan is attached at Asn156. In terms of domain architecture, LRRCT spans 201–254 (NPWVCDCRLYDLVHLLDGWVSSNLIFIEARLRCASPRSLAGVAFSQLELRKCQS). The region spanning 267-336 (PLGSTVLLRC…YICQAKNFLG (70 aa)) is the Ig-like C2-type domain. A disulfide bridge links Cys276 with Cys329. 2 N-linked (GlcNAc...) asparagine glycosylation sites follow: Asn297 and Asn456. In terms of domain architecture, Fibronectin type-III spans 431–519 (MVRSLKVVGD…QCVIFSTDEV (89 aa)). An LRR 6 repeat occupies 526–549 (QRLINMVVISVAAIIALPPTLLVC). A helical membrane pass occupies residues 528–548 (LINMVVISVAAIIALPPTLLV). Topologically, residues 549-624 (CCGALRRRCH…GGRRINEYFC (76 aa)) are cytoplasmic.

In terms of assembly, may form a homodimer. Interacts with LRIT2; may form a heterodimer with LRIT2. Interacts (via its N-terminal extracellular domain) with metabotropic glutamate receptor GRM6. Interacts (via its extreme C-terminus) with the scaffold protein FRMPD2 (via the third PDZ domain); the interaction leads to their colocalization in photoreceptor synapses. Expressed predominantly in developing photoreceptor and bipolar cells.

It localises to the endoplasmic reticulum membrane. The protein resides in the cell projection. Its subcellular location is the dendrite. Its function is as follows. Photoreceptor synaptic protein essential for normal vision. Involved in synapse formation in cone photoreceptor cells. The sequence is that of Leucine-rich repeat, immunoglobulin-like domain and transmembrane domain-containing protein 1 (Lrit1) from Mus musculus (Mouse).